We begin with the raw amino-acid sequence, 159 residues long: RNA pyrophosphohydrolase (159 aa).

In terms of domain architecture, Nudix hydrolase spans 6-149 (GFRPNVGIIL…KREVYRRALK (144 aa)). The short motif at 38 to 59 (GGINDRESPEEALYRELNEEVG) is the Nudix box element.

The protein belongs to the Nudix hydrolase family. RppH subfamily. It depends on a divalent metal cation as a cofactor.

In terms of biological role, accelerates the degradation of transcripts by removing pyrophosphate from the 5'-end of triphosphorylated RNA, leading to a more labile monophosphorylated state that can stimulate subsequent ribonuclease cleavage. The sequence is that of RNA pyrophosphohydrolase from Ectopseudomonas mendocina (strain ymp) (Pseudomonas mendocina).